Reading from the N-terminus, the 169-residue chain is Putative hydrogenase maturation protease MJ0631 (169 aa).

This sequence belongs to the peptidase A31 family.

This is Putative hydrogenase maturation protease MJ0631 from Methanocaldococcus jannaschii (strain ATCC 43067 / DSM 2661 / JAL-1 / JCM 10045 / NBRC 100440) (Methanococcus jannaschii).